A 601-amino-acid chain; its full sequence is Rhizobactin siderophore biosynthesis protein RhbF (601 aa).

It belongs to the IucA/IucC family.

Its pathway is siderophore biosynthesis; rhizobactin biosynthesis. The protein is Rhizobactin siderophore biosynthesis protein RhbF (rhbF) of Rhizobium meliloti (strain 1021) (Ensifer meliloti).